Consider the following 240-residue polypeptide: Small ribosomal subunit protein uS3 (240 aa).

One can recognise a KH type-2 domain in the interval 39–107 (IREFIKEECK…ELHLNIVEVR (69 aa)). Basic and acidic residues predominate over residues 212–222 (PQARDRRHAEL). The interval 212 to 240 (PQARDRRHAELQEGGGPRPQGGGRPRRDR) is disordered. Over residues 224-234 (EGGGPRPQGGG) the composition is skewed to gly residues.

The protein belongs to the universal ribosomal protein uS3 family. Part of the 30S ribosomal subunit. Forms a tight complex with proteins S10 and S14.

Its function is as follows. Binds the lower part of the 30S subunit head. Binds mRNA in the 70S ribosome, positioning it for translation. The sequence is that of Small ribosomal subunit protein uS3 from Dinoroseobacter shibae (strain DSM 16493 / NCIMB 14021 / DFL 12).